The sequence spans 655 residues: Epithelial sodium channel subunit gamma (655 aa).

The Cytoplasmic segment spans residues 1-55 (MAPGEKIKAKIKKNLPVRGPQAPTIKDLMHWYCLNTNTHGCRRIVVSRGRLRRLL). A helical transmembrane segment spans residues 56-76 (WIAFTLTAVALIIWQCALLVF). Over 77-547 (SFYTVSVSIK…GGQLGLWMSC (471 aa)) the chain is Extracellular. Cystine bridges form between C100/C289, C213/C220, C266/C273, C378/C463, C400/C459, C404/C455, C413/C440, and C415/C429. The segment at 140–227 (RKRREAGSMR…SDCATYTFSS (88 aa)) is gating release of inhibition by proteolysis (GRIP); protease-sensitive region that is responsible for the proteolytic activation of the channel. N215 is a glycosylation site (N-linked (GlcNAc...) asparagine). N277 is a glycosylation site (N-linked (GlcNAc...) asparagine). A glycan (N-linked (GlcNAc...) asparagine) is linked at N503. Residues 548 to 568 (SVVCVIEIIEVFFIDFFSIIA) traverse the membrane as a helical segment. Over 569–655 (RRQWQKAKDW…LTDTQLTNEF (87 aa)) the chain is Cytoplasmic. A disordered region spans residues 582 to 636 (RRTPPSTETPSSQQGQDNPALDTDDDLPTFTSAMRLPPAPEAPVPGTPPPRYNTL). Residues 585-598 (PPSTETPSSQQGQD) are compositionally biased toward polar residues. Residues 618–632 (PPAPEAPVPGTPPPR) show a composition bias toward pro residues. A PY motif; recruits WW domain-containing proteins and is thereby required for ubiquitination and inhibition of the channel by NEDD4 and NEDD4L motif is present at residues 629–633 (PPPRY).

The protein belongs to the amiloride-sensitive sodium channel (TC 1.A.6) family. SCNN1G subfamily. Component of the heterotrimeric epithelial sodium channel (ENaC) composed of an alpha/SCNN1A, a beta/SCNN1B and a gamma/SCNN1G subunit. Interacts with WWP1 (via WW domains). Interacts with WWP2 (via WW domains); inhibits the channel. Interacts with the full-length immature form of PCSK9 (pro-PCSK9); inhibits ENaC by promoting its proteasomal degradation. Interacts with BPIFA1; the interaction is indirect via SCNN1B and inhibits the proteolytic maturation of SCNN1A and SCNN1G and the activation of ENaC. Post-translationally, phosphorylated on serine and threonine residues. Aldosterone and insulin increase the basal level of phosphorylation. Ubiquitinated. Can be ubiquitinated at multiple sites and undergo monoubiquitination and polyubiquitination. Ubiquitination by NEDD4 or NEDD4L inhibits the ENaC channel through endocytosis, intracellular retention and degradation of its individual subunits. In terms of processing, ENaC is activated through the proteolytic maturation of its subunits. Furin cleaves the SCNN1G subunit first, followed by cleavage by prostasin (PRSS8), which results in a stepwise increase in the open probability of the channel due to the release of an inhibitory tract. BPIFA1, which is recruited by the SCNN1B subunit, prevents the proteolytic activation of ENaC. Post-translationally, N-glycosylated. N-linked glycans are processed to complex type during ENaC complex assembly and transport to the plasma membrane. Lung and kidney.

The protein localises to the apical cell membrane. It carries out the reaction Na(+)(in) = Na(+)(out). With respect to regulation, originally identified and characterized by its inhibition by the diuretic drug amiloride. This is one of the three pore-forming subunits of the heterotrimeric epithelial sodium channel (ENaC), a critical regulator of sodium balance and fluid homeostasis. ENaC operates in epithelial tissues, where it mediates the electrodiffusion of sodium ions from extracellular fluid through the apical membrane of cells, with water following osmotically. It plays a key role in maintaining sodium homeostasis through electrogenic sodium reabsorption in the kidneys. Additionally, ENaC is essential for airway surface liquid homeostasis, which is crucial for proper mucus clearance. The chain is Epithelial sodium channel subunit gamma from Mus musculus (Mouse).